The chain runs to 570 residues: Sulfite reductase [NADPH] hemoprotein beta-component (570 aa).

The [4Fe-4S] cluster site is built by cysteine 434, cysteine 440, cysteine 479, and cysteine 483. Cysteine 483 provides a ligand contact to siroheme.

Belongs to the nitrite and sulfite reductase 4Fe-4S domain family. Alpha(8)-beta(8). The alpha component is a flavoprotein, the beta component is a hemoprotein. It depends on siroheme as a cofactor. The cofactor is [4Fe-4S] cluster.

The enzyme catalyses hydrogen sulfide + 3 NADP(+) + 3 H2O = sulfite + 3 NADPH + 4 H(+). Its pathway is sulfur metabolism; hydrogen sulfide biosynthesis; hydrogen sulfide from sulfite (NADPH route): step 1/1. Component of the sulfite reductase complex that catalyzes the 6-electron reduction of sulfite to sulfide. This is one of several activities required for the biosynthesis of L-cysteine from sulfate. The chain is Sulfite reductase [NADPH] hemoprotein beta-component (cysI) from Escherichia coli (strain K12).